Here is a 356-residue protein sequence, read N- to C-terminus: MSQYWSAVVHGLTPYVPGEQPKLANLVKLNTNEHPYGPSPRALAAIRAEASDALRLYPDPHADRLKAAIATRFGVEPREVFVGNGSDEVLAHAFMALLKHERPLRFPDISYSFYPVYCGLYGIAFETVPLDDDFAIRPDDYLPHGSVAAGGIIFPNPNAPTGRLMPLSDIERIVAGNPQCVVVIDEAYVDFGGESAIPLVRHHPNLLVVQTLSKSRSLAGLRVGFAVGNPDLIEALDRVKDSFNSYPLDRLAIAGGVAAIEDEEHFQRTRMAVIATRERLSADLASLGFDVLPSAANFVFTRHPHRDAGELAAQLRRRAIIVRHFRQPRIEQFLRITVGTDEQCAALVEALRDILR.

At Lys214 the chain carries N6-(pyridoxal phosphate)lysine.

This sequence belongs to the class-II pyridoxal-phosphate-dependent aminotransferase family. Histidinol-phosphate aminotransferase subfamily. In terms of assembly, homodimer. Requires pyridoxal 5'-phosphate as cofactor.

It catalyses the reaction L-histidinol phosphate + 2-oxoglutarate = 3-(imidazol-4-yl)-2-oxopropyl phosphate + L-glutamate. It participates in amino-acid biosynthesis; L-histidine biosynthesis; L-histidine from 5-phospho-alpha-D-ribose 1-diphosphate: step 7/9. This chain is Histidinol-phosphate aminotransferase, found in Aromatoleum aromaticum (strain DSM 19018 / LMG 30748 / EbN1) (Azoarcus sp. (strain EbN1)).